An 81-amino-acid polypeptide reads, in one-letter code: Serine rich endogenous peptide 21 (81 aa).

The N-terminal stretch at 1-40 is a signal peptide; that stretch reads MLELHFEFIDLNQPKMYKFVVCLLTLSFLLLSGLSNTALA. The short motif at 65-79 is the SCOOP motif element; that stretch reads KVRVLPSASRRGPGQ. A SxS motif essential for MIK2 binding motif is present at residues 71 to 73; the sequence is SAS.

It belongs to the serine rich endogenous peptide (SCOOP) phytocytokine family. As to quaternary structure, interacts with MIK2 (via extracellular leucine-rich repeat domain); this interaction triggers the formation of complex between MIK2 and the BAK1/SERK3 and SERK4 coreceptors, and subsequent BAK1 activation by phosphorylation.

The protein localises to the cell membrane. Its subcellular location is the secreted. It is found in the extracellular space. It localises to the apoplast. Brassicaceae-specific phytocytokine (plant endogenous peptide released into the apoplast) perceived by MIK2 in a BAK1/SERK3 and SERK4 coreceptors-dependent manner, that modulates various physiological and antimicrobial processes including growth prevention and reactive oxygen species (ROS) response regulation. The sequence is that of Serine rich endogenous peptide 21 from Arabidopsis thaliana (Mouse-ear cress).